Reading from the N-terminus, the 136-residue chain is NADH-ubiquinone oxidoreductase chain 2 (136 aa).

Helical transmembrane passes span 12 to 32 (YFLI…NQSF), 34 to 54 (FLIP…MWLV), 74 to 94 (IGPL…WLMV), and 99 to 119 (FLLM…AVIL).

Belongs to the complex I subunit 2 family.

It is found in the mitochondrion inner membrane. It catalyses the reaction a ubiquinone + NADH + 5 H(+)(in) = a ubiquinol + NAD(+) + 4 H(+)(out). Functionally, core subunit of the mitochondrial membrane respiratory chain NADH dehydrogenase (Complex I) that is believed to belong to the minimal assembly required for catalysis. Complex I functions in the transfer of electrons from NADH to the respiratory chain. The immediate electron acceptor for the enzyme is believed to be ubiquinone. This chain is NADH-ubiquinone oxidoreductase chain 2 (ND2), found in Artemia salina (Brine shrimp).